Here is an 876-residue protein sequence, read N- to C-terminus: Alanine--tRNA ligase (876 aa).

4 residues coordinate Zn(2+): histidine 565, histidine 569, cysteine 667, and histidine 671.

Belongs to the class-II aminoacyl-tRNA synthetase family. It depends on Zn(2+) as a cofactor.

It localises to the cytoplasm. The enzyme catalyses tRNA(Ala) + L-alanine + ATP = L-alanyl-tRNA(Ala) + AMP + diphosphate. In terms of biological role, catalyzes the attachment of alanine to tRNA(Ala) in a two-step reaction: alanine is first activated by ATP to form Ala-AMP and then transferred to the acceptor end of tRNA(Ala). Also edits incorrectly charged Ser-tRNA(Ala) and Gly-tRNA(Ala) via its editing domain. The sequence is that of Alanine--tRNA ligase from Staphylococcus epidermidis (strain ATCC 35984 / DSM 28319 / BCRC 17069 / CCUG 31568 / BM 3577 / RP62A).